A 130-amino-acid polypeptide reads, in one-letter code: Small ribosomal subunit protein uS9 (130 aa).

The tract at residues 107–130 is disordered; sequence DSREVERKKVGLRKARRRPQFSKR. The segment covering 116–130 has biased composition (basic residues); sequence VGLRKARRRPQFSKR.

It belongs to the universal ribosomal protein uS9 family.

This is Small ribosomal subunit protein uS9 from Marinomonas sp. (strain MWYL1).